The following is a 453-amino-acid chain: Transmembrane protease serine 3 (453 aa).

Residues 1–48 (MGENDPPAAEAPFSFRSLFGLDDLKISPVAPDGDAVAAQILSLLPLKF) are Cytoplasmic-facing. The chain crosses the membrane as a helical; Signal-anchor for type II membrane protein span at residues 49–69 (FPIIVIGIIALILALAIGLGI). Residues 70-453 (HFDCSGKYRC…HEQLERDLKT (384 aa)) lie on the Extracellular side of the membrane. Positions 72–108 (DCSGKYRCHSSFKCIELTARCDGVSDCKNAEDEYRCV) constitute an LDL-receptor class A domain. 10 disulfides stabilise this stretch: Cys73–Cys85, Cys79–Cys98, Cys92–Cys107, Cys129–Cys194, Cys142–Cys204, Cys207–Cys324, Cys242–Cys258, Cys338–Cys406, Cys369–Cys385, and Cys396–Cys424. The SRCR domain maps to 104–205 (EYRCVRVSGQ…SGHVVTLKCS (102 aa)). One can recognise a Peptidase S1 domain in the interval 217–448 (IVGGNMSSLT…FLDWIHEQLE (232 aa)). N-linked (GlcNAc...) asparagine glycosylation is present at Asn221. Catalysis depends on charge relay system residues His257 and Asp304. Catalysis depends on Ser400, which acts as the Charge relay system.

Belongs to the peptidase S1 family. Post-translationally, undergoes autoproteolytic activation. Strongly expressed in liver, cochlea, brain, cerebellum, spleen, lung, and muscle and at a lower degree in retina, kidney, and heart. Expressed in the spiral ganglion, the cells supporting the organ of Corti and the stria vascularis. Isoform 2 is strongly expressed only in the cochlea with very faint expression in the cerebellum, spleen and muscle.

The protein localises to the endoplasmic reticulum membrane. Probable serine protease that plays a role in hearing. Acts as a permissive factor for cochlear hair cell survival and activation at the onset of hearing and is required for saccular hair cell survival. Activates ENaC (in vitro). The sequence is that of Transmembrane protease serine 3 (Tmprss3) from Mus musculus (Mouse).